Reading from the N-terminus, the 352-residue chain is N-acetyl-gamma-glutamyl-phosphate reductase (352 aa).

Cys-155 is an active-site residue.

It belongs to the NAGSA dehydrogenase family. Type 1 subfamily.

It localises to the cytoplasm. The catalysed reaction is N-acetyl-L-glutamate 5-semialdehyde + phosphate + NADP(+) = N-acetyl-L-glutamyl 5-phosphate + NADPH + H(+). It functions in the pathway amino-acid biosynthesis; L-arginine biosynthesis; N(2)-acetyl-L-ornithine from L-glutamate: step 3/4. Its function is as follows. Catalyzes the NADPH-dependent reduction of N-acetyl-5-glutamyl phosphate to yield N-acetyl-L-glutamate 5-semialdehyde. The chain is N-acetyl-gamma-glutamyl-phosphate reductase from Acaryochloris marina (strain MBIC 11017).